The sequence spans 463 residues: Trigger factor (463 aa).

Residues G162–P243 form the PPIase FKBP-type domain. The disordered stretch occupies residues T427–A463. A compositionally biased stretch (acidic residues) spans V432 to S442.

Belongs to the FKBP-type PPIase family. Tig subfamily.

It is found in the cytoplasm. It carries out the reaction [protein]-peptidylproline (omega=180) = [protein]-peptidylproline (omega=0). In terms of biological role, involved in protein export. Acts as a chaperone by maintaining the newly synthesized protein in an open conformation. Functions as a peptidyl-prolyl cis-trans isomerase. The polypeptide is Trigger factor (Streptomyces avermitilis (strain ATCC 31267 / DSM 46492 / JCM 5070 / NBRC 14893 / NCIMB 12804 / NRRL 8165 / MA-4680)).